Here is a 243-residue protein sequence, read N- to C-terminus: UPF0246 protein SEQ_2141 (243 aa).

It belongs to the UPF0246 family.

This chain is UPF0246 protein SEQ_2141, found in Streptococcus equi subsp. equi (strain 4047).